A 343-amino-acid chain; its full sequence is Aspartate carbamoyltransferase catalytic subunit (343 aa).

Carbamoyl phosphate-binding residues include Arg-91 and Thr-92. Residue Lys-119 participates in L-aspartate binding. Positions 141, 171, and 174 each coordinate carbamoyl phosphate. Arg-204 and Arg-259 together coordinate L-aspartate. The carbamoyl phosphate site is built by Gly-300 and Pro-301.

It belongs to the aspartate/ornithine carbamoyltransferase superfamily. ATCase family. Heterododecamer (2C3:3R2) of six catalytic PyrB chains organized as two trimers (C3), and six regulatory PyrI chains organized as three dimers (R2).

It carries out the reaction carbamoyl phosphate + L-aspartate = N-carbamoyl-L-aspartate + phosphate + H(+). The protein operates within pyrimidine metabolism; UMP biosynthesis via de novo pathway; (S)-dihydroorotate from bicarbonate: step 2/3. Catalyzes the condensation of carbamoyl phosphate and aspartate to form carbamoyl aspartate and inorganic phosphate, the committed step in the de novo pyrimidine nucleotide biosynthesis pathway. The chain is Aspartate carbamoyltransferase catalytic subunit from Burkholderia thailandensis (strain ATCC 700388 / DSM 13276 / CCUG 48851 / CIP 106301 / E264).